The sequence spans 149 residues: Arginine repressor (149 aa).

It belongs to the ArgR family.

It localises to the cytoplasm. The protein operates within amino-acid biosynthesis; L-arginine biosynthesis [regulation]. Regulates arginine biosynthesis genes. The chain is Arginine repressor from Bacillus mycoides (strain KBAB4) (Bacillus weihenstephanensis).